A 457-amino-acid polypeptide reads, in one-letter code: uncharacterized protein (457 aa).

Residue Lys75 is modified to N6-(pyridoxal phosphate)lysine.

Pyridoxal 5'-phosphate is required as a cofactor.

This is an uncharacterized protein from Sinorhizobium fredii (strain NBRC 101917 / NGR234).